Reading from the N-terminus, the 269-residue chain is MFKIYAVSDSIGETAEQVANATAYQFGSSVKVERVPYVKTFEDVNNLISIIENPNEAMIISTIVLVDIREFLVQRCVESGIHISNVLGPCISLVSTILNKTPEYKPGAVWDMDKKYYKKIEAMEFAIRYDDSKDHSGIKHADIVLIGLSRTSKTPLSIYLANKGIKALNIPLMPEVPVPEELFEIDRKKIIGLTIDPMHLIEIRRHRVDNMMKIPTELKYANAERVLDELEFADKIMRKLKCKVIDVTKRAIEDTALIIMESVFSDRII.

An ADP-binding site is contributed by 147–154; it reads GLSRTSKT.

The protein belongs to the pyruvate, phosphate/water dikinase regulatory protein family. PDRP subfamily.

The enzyme catalyses N(tele)-phospho-L-histidyl/L-threonyl-[pyruvate, phosphate dikinase] + ADP = N(tele)-phospho-L-histidyl/O-phospho-L-threonyl-[pyruvate, phosphate dikinase] + AMP + H(+). It catalyses the reaction N(tele)-phospho-L-histidyl/O-phospho-L-threonyl-[pyruvate, phosphate dikinase] + phosphate + H(+) = N(tele)-phospho-L-histidyl/L-threonyl-[pyruvate, phosphate dikinase] + diphosphate. In terms of biological role, bifunctional serine/threonine kinase and phosphorylase involved in the regulation of the pyruvate, phosphate dikinase (PPDK) by catalyzing its phosphorylation/dephosphorylation. The protein is Putative pyruvate, phosphate dikinase regulatory protein of Clostridium botulinum (strain 657 / Type Ba4).